The chain runs to 280 residues: Hydrolase MT0498 (280 aa).

A CN hydrolase domain is found at 1–251 (MRIALAQIRS…PQLLVADIDV (251 aa)). Catalysis depends on Glu40, which acts as the Proton acceptor. The active-site Proton donor is Lys110. Cys146 functions as the Nucleophile in the catalytic mechanism.

This sequence belongs to the carbon-nitrogen hydrolase superfamily. NIT1/NIT2 family.

This is Hydrolase MT0498 from Mycobacterium tuberculosis (strain CDC 1551 / Oshkosh).